Consider the following 90-residue polypeptide: Probable Fe(2+)-trafficking protein (90 aa).

It belongs to the Fe(2+)-trafficking protein family.

Could be a mediator in iron transactions between iron acquisition and iron-requiring processes, such as synthesis and/or repair of Fe-S clusters in biosynthetic enzymes. This Chromohalobacter salexigens (strain ATCC BAA-138 / DSM 3043 / CIP 106854 / NCIMB 13768 / 1H11) protein is Probable Fe(2+)-trafficking protein.